A 1082-amino-acid polypeptide reads, in one-letter code: Error-prone DNA polymerase (1082 aa).

This sequence belongs to the DNA polymerase type-C family. DnaE2 subfamily.

The protein localises to the cytoplasm. It catalyses the reaction DNA(n) + a 2'-deoxyribonucleoside 5'-triphosphate = DNA(n+1) + diphosphate. Its function is as follows. DNA polymerase involved in damage-induced mutagenesis and translesion synthesis (TLS). It is not the major replicative DNA polymerase. The polypeptide is Error-prone DNA polymerase (Xanthomonas campestris pv. campestris (strain 8004)).